Consider the following 509-residue polypeptide: Bifunctional purine biosynthesis protein PurH (509 aa).

The 144-residue stretch at 1 to 144 folds into the MGS-like domain; that stretch reads MKRALLSVSD…KNARDVIVVV (144 aa).

It belongs to the PurH family.

The enzyme catalyses (6R)-10-formyltetrahydrofolate + 5-amino-1-(5-phospho-beta-D-ribosyl)imidazole-4-carboxamide = 5-formamido-1-(5-phospho-D-ribosyl)imidazole-4-carboxamide + (6S)-5,6,7,8-tetrahydrofolate. It carries out the reaction IMP + H2O = 5-formamido-1-(5-phospho-D-ribosyl)imidazole-4-carboxamide. Its pathway is purine metabolism; IMP biosynthesis via de novo pathway; 5-formamido-1-(5-phospho-D-ribosyl)imidazole-4-carboxamide from 5-amino-1-(5-phospho-D-ribosyl)imidazole-4-carboxamide (10-formyl THF route): step 1/1. It functions in the pathway purine metabolism; IMP biosynthesis via de novo pathway; IMP from 5-formamido-1-(5-phospho-D-ribosyl)imidazole-4-carboxamide: step 1/1. In Oenococcus oeni (strain ATCC BAA-331 / PSU-1), this protein is Bifunctional purine biosynthesis protein PurH.